A 383-amino-acid chain; its full sequence is Prokineticin receptor 2 (383 aa).

Residues 1–54 lie on the Extracellular side of the membrane; that stretch reads MGDQNGNTSFAPDLNPPQDHVSLLPLNYSYGDYDIPLDDDEDVTKTQTFFAAKI. Residues Asn-7 and Asn-27 are each glycosylated (N-linked (GlcNAc...) asparagine). The helical transmembrane segment at 55–75 threads the bilayer; sequence VIGVALAGIMLVCGVGNFVFI. At 76–89 the chain is on the cytoplasmic side; sequence AALARYKKLRNLTN. A helical membrane pass occupies residues 90-110; the sequence is LLIANLAISDFLVAIVCCPFE. Residues 111–136 lie on the Extracellular side of the membrane; sequence MDYYVVRQLSWEHGHVLCASVNYLRT. A disulfide bond links Cys-128 and Cys-207. Residues 137–157 traverse the membrane as a helical segment; that stretch reads VSLYVSTNALLAIAIDRYLAI. Residues 158-170 lie on the Cytoplasmic side of the membrane; the sequence is VHPLKRMNYQTAS. A helical transmembrane segment spans residues 171–191; that stretch reads FLIALVWMVSILIAIPSAYFT. The Extracellular portion of the chain corresponds to 192–222; it reads TETILVIVKNQEKLFCGQIWPVDQQLYYKSY. Residues 223–243 form a helical membrane-spanning segment; the sequence is FLFVFGLEFVGPVVTMTLCYA. At 244 to 272 the chain is on the cytoplasmic side; it reads RISQELWFKAVPGFQTEQIRKRLRCRRKT. A helical membrane pass occupies residues 273-293; sequence VLLLMGILTAYVLCWAPFYGF. At 294–312 the chain is on the extracellular side; it reads TIVRDFFPTLVVKEKHYLT. Residues 313-333 traverse the membrane as a helical segment; sequence AFYVVECIAMSNSMINTICFV. Residues 334 to 383 lie on the Cytoplasmic side of the membrane; the sequence is TVKNNTMKYFKKMLLLHWRPSHYGSKSSADLDLKTSGVPATEEVDCIRLK.

This sequence belongs to the G-protein coupled receptor 1 family. As to quaternary structure, homodimer. Abundantly expressed in the CNS and reproductive organs with the highest levels in the cerebrum, cerebellum, testis and ovary.

The protein localises to the cell membrane. Functionally, receptor for prokineticin 2. Exclusively coupled to the G(q) subclass of heteromeric G proteins. Activation leads to mobilization of calcium, stimulation of phosphoinositide turnover and activation of p44/p42 mitogen-activated protein kinase. The sequence is that of Prokineticin receptor 2 (Prokr2) from Rattus norvegicus (Rat).